Consider the following 835-residue polypeptide: uncharacterized protein (835 aa).

Disordered regions lie at residues 1–38 (MKTS…VGSR), 317–477 (DFDL…QSGR), 489–668 (SLSK…IKRR), 721–750 (DLEN…VSSF), and 810–835 (QEQQ…ELMF). Low complexity-rich tracts occupy residues 7 to 37 (STVP…TVGS), 328 to 351 (NNNN…TPTT), and 361 to 395 (SSTN…SGSS). Composition is skewed to polar residues over residues 396-406 (IGNRTEVSSSI) and 415-424 (IIRSKSSLGT). Over residues 432–442 (GGSGGGGGGGM) the composition is skewed to gly residues. Residues 449–477 (PISKTPTTMITKTASSSSPNLATSTQSGR) are compositionally biased toward polar residues. The segment covering 489–510 (SLSKQSSSSNLTRSLPPIIKSP) has biased composition (low complexity). Pro residues predominate over residues 511–521 (ISPPGPTPPAP). A compositionally biased stretch (low complexity) spans 522–629 (TLTKSKSTPS…STTSSATKKS (108 aa)). A compositionally biased stretch (polar residues) spans 631–640 (ITKTNPTDEQ). 2 stretches are compositionally biased toward low complexity: residues 641 to 664 (TTTP…STSS) and 724 to 750 (NNNN…VSSF). A compositionally biased stretch (acidic residues) spans 826-835 (ILDEDDELMF).

This is an uncharacterized protein from Dictyostelium discoideum (Social amoeba).